Here is a 257-residue protein sequence, read N- to C-terminus: Pyridoxine 5'-phosphate synthase (257 aa).

Asn-6 serves as a coordination point for 3-amino-2-oxopropyl phosphate. Residue 8 to 9 (DH) coordinates 1-deoxy-D-xylulose 5-phosphate. A 3-amino-2-oxopropyl phosphate-binding site is contributed by Arg-17. Residue His-41 is the Proton acceptor of the active site. 1-deoxy-D-xylulose 5-phosphate is bound by residues Arg-43 and His-48. The active-site Proton acceptor is the Glu-68. 1-deoxy-D-xylulose 5-phosphate is bound at residue Thr-98. The active-site Proton donor is the His-210. Residues Gly-211 and 232 to 233 (GQ) each bind 3-amino-2-oxopropyl phosphate.

It belongs to the PNP synthase family. Homooctamer; tetramer of dimers.

The protein resides in the cytoplasm. It catalyses the reaction 3-amino-2-oxopropyl phosphate + 1-deoxy-D-xylulose 5-phosphate = pyridoxine 5'-phosphate + phosphate + 2 H2O + H(+). It functions in the pathway cofactor biosynthesis; pyridoxine 5'-phosphate biosynthesis; pyridoxine 5'-phosphate from D-erythrose 4-phosphate: step 5/5. Catalyzes the complicated ring closure reaction between the two acyclic compounds 1-deoxy-D-xylulose-5-phosphate (DXP) and 3-amino-2-oxopropyl phosphate (1-amino-acetone-3-phosphate or AAP) to form pyridoxine 5'-phosphate (PNP) and inorganic phosphate. The polypeptide is Pyridoxine 5'-phosphate synthase (Campylobacter jejuni subsp. doylei (strain ATCC BAA-1458 / RM4099 / 269.97)).